The chain runs to 153 residues: Histone H2A.Z-specific chaperone CHZ1 (153 aa).

Positions 1–29 are enriched in basic and acidic residues; sequence MSDEAKEKRELESQKESSHNKSEKSVEPK. The segment at 1–153 is disordered; it reads MSDEAKEKRE…EDEEDDDFKE (153 aa). An N-acetylserine modification is found at Ser-2. Residues 56 to 65 show a composition bias toward polar residues; sequence LTKSENNGTV. Residues Ser-68 and Ser-70 each carry the phosphoserine modification. The segment covering 84–94 has biased composition (acidic residues); the sequence is EGEEEEDDLAE. An important for H2A.Z-H2B binding region spans residues 87 to 108; it reads EEEDDLAEIDTSNIITSGRRTR. Positions 110–138 are enriched in basic and acidic residues; sequence KVIDYKKTAEELDKKEPSTGSKDDVGYGE. Over residues 139–153 the composition is skewed to acidic residues; sequence KEEDDEDEEDDDFKE.

It belongs to the CHZ1 family. In terms of assembly, forms a heterotrimer with H2A.Z-H2B, stabilizing the association of the histone dimer. Also, with a lower affinity, forms a heterotrimer with H2A-H2B.

The protein resides in the nucleus. In terms of biological role, forms a chaperone-bound H2A.Z-H2B complex that acts as a source for SWR1 complex-dependent H2A to H2A.Z histone replacement in chromatin. The polypeptide is Histone H2A.Z-specific chaperone CHZ1 (CHZ1) (Saccharomyces cerevisiae (strain ATCC 204508 / S288c) (Baker's yeast)).